Consider the following 401-residue polypeptide: Probable tRNA sulfurtransferase (401 aa).

A THUMP domain is found at 63 to 168 (TTAEQALSYL…EREAFLYGAR (106 aa)). Residues 186–187 (LL), 211–212 (YF), arginine 268, glycine 290, and glutamine 299 each bind ATP.

This sequence belongs to the ThiI family.

The protein localises to the cytoplasm. It carries out the reaction [ThiI sulfur-carrier protein]-S-sulfanyl-L-cysteine + a uridine in tRNA + 2 reduced [2Fe-2S]-[ferredoxin] + ATP + H(+) = [ThiI sulfur-carrier protein]-L-cysteine + a 4-thiouridine in tRNA + 2 oxidized [2Fe-2S]-[ferredoxin] + AMP + diphosphate. The catalysed reaction is [ThiS sulfur-carrier protein]-C-terminal Gly-Gly-AMP + S-sulfanyl-L-cysteinyl-[cysteine desulfurase] + AH2 = [ThiS sulfur-carrier protein]-C-terminal-Gly-aminoethanethioate + L-cysteinyl-[cysteine desulfurase] + A + AMP + 2 H(+). Its pathway is cofactor biosynthesis; thiamine diphosphate biosynthesis. Catalyzes the ATP-dependent transfer of a sulfur to tRNA to produce 4-thiouridine in position 8 of tRNAs, which functions as a near-UV photosensor. Also catalyzes the transfer of sulfur to the sulfur carrier protein ThiS, forming ThiS-thiocarboxylate. This is a step in the synthesis of thiazole, in the thiamine biosynthesis pathway. The sulfur is donated as persulfide by IscS. This is Probable tRNA sulfurtransferase from Treponema pallidum (strain Nichols).